Reading from the N-terminus, the 295-residue chain is (R)-3-hydroxydecanoyl-ACP:CoA transacylase (295 aa).

Residues 28 to 254 enclose the AB hydrolase-1 domain; that stretch reads NTIILINGSL…VIRDAGHFLD (227 aa).

It functions in the pathway polyester biosynthesis; polyhydroxyalkanoate biosynthesis. Its function is as follows. Catalyzes the transfer of the acyl moiety from in vitro synthesized 3-hydroxydecanoyl-CoA to acyl carrier protein. In Ectopseudomonas oleovorans (Pseudomonas oleovorans), this protein is (R)-3-hydroxydecanoyl-ACP:CoA transacylase (phaG).